The chain runs to 98 residues: Plastocyanin (98 aa).

In terms of domain architecture, Plastocyanin-like spans 1–98 (AQIVKLGGDD…AGMKMTITVQ (98 aa)). Residues histidine 38, cysteine 83, histidine 86, and methionine 91 each contribute to the Cu(2+) site.

It belongs to the plastocyanin family. It depends on Cu(2+) as a cofactor.

Its subcellular location is the plastid. The protein resides in the chloroplast thylakoid membrane. Its function is as follows. Participates in electron transfer between P700 and the cytochrome b6-f complex in photosystem I. Has antiviral activity against Potato virus Y (strain N). The sequence is that of Plastocyanin (PETE) from Ulva pertusa (Sea lettuce).